The chain runs to 88 residues: Elongation factor 1-beta (88 aa).

This sequence belongs to the EF-1-beta/EF-1-delta family.

In terms of biological role, promotes the exchange of GDP for GTP in EF-1-alpha/GDP, thus allowing the regeneration of EF-1-alpha/GTP that could then be used to form the ternary complex EF-1-alpha/GTP/AAtRNA. The protein is Elongation factor 1-beta (ef1b) of Thermoplasma acidophilum (strain ATCC 25905 / DSM 1728 / JCM 9062 / NBRC 15155 / AMRC-C165).